Here is a 300-residue protein sequence, read N- to C-terminus: Putative heme-binding peroxidase (300 aa).

His39 functions as the Proton acceptor in the catalytic mechanism. Disordered stretches follow at residues 44–64 (YDKS…EAEG) and 116–135 (GRTD…LPDA). A compositionally biased stretch (basic and acidic residues) spans 116 to 126 (GRTDFADDSRV). Position 163 (His163) interacts with heme b. Trp179 functions as the Tryptophan radical intermediate in the catalytic mechanism.

This sequence belongs to the peroxidase family. Cytochrome c peroxidase subfamily. Requires heme b as cofactor.

Destroys radicals which are normally produced within the cells and which are toxic to biological systems. This Pyricularia oryzae (strain 70-15 / ATCC MYA-4617 / FGSC 8958) (Rice blast fungus) protein is Putative heme-binding peroxidase.